Here is a 488-residue protein sequence, read N- to C-terminus: Ribulose bisphosphate carboxylase large chain (488 aa).

The substrate site is built by Asn127 and Thr177. Residue Lys179 is the Proton acceptor of the active site. Lys181 serves as a coordination point for substrate. Mg(2+)-binding residues include Lys205, Asp207, and Glu208. Lys205 carries the post-translational modification N6-carboxylysine. His297 functions as the Proton acceptor in the catalytic mechanism. 3 residues coordinate substrate: Arg298, His330, and Ser382.

It belongs to the RuBisCO large chain family. Type I subfamily. Heterohexadecamer of 8 large chains and 8 small chains. The cofactor is Mg(2+).

It is found in the plastid. Its subcellular location is the chloroplast. It catalyses the reaction 2 (2R)-3-phosphoglycerate + 2 H(+) = D-ribulose 1,5-bisphosphate + CO2 + H2O. The catalysed reaction is D-ribulose 1,5-bisphosphate + O2 = 2-phosphoglycolate + (2R)-3-phosphoglycerate + 2 H(+). In terms of biological role, ruBisCO catalyzes two reactions: the carboxylation of D-ribulose 1,5-bisphosphate, the primary event in carbon dioxide fixation, as well as the oxidative fragmentation of the pentose substrate in the photorespiration process. Both reactions occur simultaneously and in competition at the same active site. The polypeptide is Ribulose bisphosphate carboxylase large chain (Gracilaria tenuistipitata var. liui (Red alga)).